A 561-amino-acid chain; its full sequence is (+)-alpha-pinene synthase TPS2FN (561 aa).

Residues arginine 276, aspartate 313, aspartate 317, arginine 455, and aspartate 458 each contribute to the (2E)-geranyl diphosphate site. Mg(2+) contacts are provided by aspartate 313 and aspartate 317. The DDXXD motif motif lies at 313-317; that stretch reads DDIYD. Mg(2+) is bound by residues aspartate 458, threonine 462, and glutamate 466.

Belongs to the terpene synthase family. Tpsb subfamily. Mg(2+) serves as cofactor. Mn(2+) is required as a cofactor. Expressed in glandular trichomes two to four weeks after flowering onset.

The enzyme catalyses (2E)-geranyl diphosphate = (1R,5R)-alpha-pinene + diphosphate. The catalysed reaction is (2E)-geranyl diphosphate = (4S)-limonene + diphosphate. It catalyses the reaction (2E)-geranyl diphosphate = sabinene + diphosphate. It carries out the reaction (2E)-geranyl diphosphate = beta-phellandrene + diphosphate. The enzyme catalyses (2E)-geranyl diphosphate = camphene + diphosphate. The catalysed reaction is (2E)-geranyl diphosphate = isoterpinolene + diphosphate. It participates in secondary metabolite biosynthesis; terpenoid biosynthesis. The protein operates within terpene metabolism; (-)-alpha-pinene biosynthesis; (-)-alpha-pinene from geranyl diphosphate: step 1/1. Its function is as follows. Involved in monoterpene (C10) olefins biosynthesis, constituants of cannabinoids and terpenoids-rich resins. Catalyzes mainly the conversion of (2E)-geranyl diphosphate to (+)-alpha-pinene, and also produces minor products such as camphene, sabinene, beta-phellandrene, (-)-limonene and isoterpinolene. This is (+)-alpha-pinene synthase TPS2FN from Cannabis sativa (Hemp).